We begin with the raw amino-acid sequence, 383 residues long: uncharacterized protein (383 aa).

The 326-residue stretch at 58–383 folds into the YcaO domain; that stretch reads GKGATRTQAR…RVGRRIRSSI (326 aa). Residues 80 to 100 are disordered; the sequence is AERKPEDETFTAHPEDCDGLD.

This is an uncharacterized protein from Methanothermobacter thermautotrophicus (strain ATCC 29096 / DSM 1053 / JCM 10044 / NBRC 100330 / Delta H) (Methanobacterium thermoautotrophicum).